Consider the following 1116-residue polypeptide: Pleckstrin homology domain-containing family A member 5 (1116 aa).

At A2 the chain carries N-acetylalanine. Residues 10-43 enclose the WW 1 domain; it reads ISLPRSWTYGITRGGRVFFINEEAKSTTWLHPVT. S55 is subject to Phosphoserine. Positions 56 to 89 constitute a WW 2 domain; that stretch reads TDLPTGWEEAYTFEGARYYINHNERKVTCKHPVT. Residues 140–163 are disordered; that stretch reads SPVGRTSRASKKVHNFGKRSNSIK. Residues 147–156 are compositionally biased toward basic residues; the sequence is RASKKVHNFG. The PH domain occupies 169–268; that stretch reads PVVRRGWLYK…WMKAMLDAAL (100 aa). K301 participates in a covalent cross-link: Glycyl lysine isopeptide (Lys-Gly) (interchain with G-Cter in SUMO2). Phosphoserine occurs at positions 382 and 410. Phosphothreonine is present on residues T438 and T460. Residues 459–495 are disordered; the sequence is RTLPRNSKTRPESICSVTPSTHDKTLGPGAEEKRRSM. The segment covering 479-495 has biased composition (basic and acidic residues); it reads THDKTLGPGAEEKRRSM. A phosphoserine mark is found at S568, S607, S809, S855, S933, and S937. Disordered regions lie at residues 928 to 978 and 1025 to 1116; these read GASD…PATE and RNKD…FMCV. Residues 930–949 are compositionally biased toward polar residues; the sequence is SDQSPLQSPSNLRDNPFRTT. The span at 952–978 shows a compositional bias: basic and acidic residues; that stretch reads RRRDDKELDTAIRENDVKPDHETPATE. Residues 1036-1046 show a composition bias toward polar residues; it reads FSPQDETQTAN. Basic and acidic residues predominate over residues 1047–1061; that stretch reads HKPEEHPEENTKNSV. Polar residues predominate over residues 1070 to 1085; the sequence is SYESTPEVSRGNQTMA. Low complexity predominate over residues 1088–1101; the sequence is SLSPSPESSASPVP.

As to expression, highly expressed in heart and kidney.

It localises to the cytoplasm. This Homo sapiens (Human) protein is Pleckstrin homology domain-containing family A member 5 (PLEKHA5).